A 385-amino-acid chain; its full sequence is Acetylornithine aminotransferase (385 aa).

Pyridoxal 5'-phosphate contacts are provided by residues 95 to 96 and Phe122; that span reads GA. Arg125 serves as a coordination point for N(2)-acetyl-L-ornithine. Residue 208–211 coordinates pyridoxal 5'-phosphate; that stretch reads DEIQ. Lys237 is modified (N6-(pyridoxal phosphate)lysine). Residue Thr265 coordinates N(2)-acetyl-L-ornithine. A pyridoxal 5'-phosphate-binding site is contributed by Thr266.

Belongs to the class-III pyridoxal-phosphate-dependent aminotransferase family. ArgD subfamily. Homodimer. The cofactor is pyridoxal 5'-phosphate.

It localises to the cytoplasm. The catalysed reaction is N(2)-acetyl-L-ornithine + 2-oxoglutarate = N-acetyl-L-glutamate 5-semialdehyde + L-glutamate. It functions in the pathway amino-acid biosynthesis; L-arginine biosynthesis; N(2)-acetyl-L-ornithine from L-glutamate: step 4/4. This Bacillus subtilis (strain 168) protein is Acetylornithine aminotransferase.